The following is a 203-amino-acid chain: Glycerol-3-phosphate acyltransferase (203 aa).

Helical transmembrane passes span 10 to 30 (LLLG…FGIM), 60 to 80 (LAAF…VFLA), 88 to 108 (AAQL…FLGF), 118 to 138 (LGTL…IWAI), and 162 to 182 (FTLG…LIFL).

Belongs to the PlsY family. In terms of assembly, probably interacts with PlsX.

It is found in the cell inner membrane. The catalysed reaction is an acyl phosphate + sn-glycerol 3-phosphate = a 1-acyl-sn-glycero-3-phosphate + phosphate. It functions in the pathway lipid metabolism; phospholipid metabolism. Catalyzes the transfer of an acyl group from acyl-phosphate (acyl-PO(4)) to glycerol-3-phosphate (G3P) to form lysophosphatidic acid (LPA). This enzyme utilizes acyl-phosphate as fatty acyl donor, but not acyl-CoA or acyl-ACP. The sequence is that of Glycerol-3-phosphate acyltransferase from Jannaschia sp. (strain CCS1).